Here is a 256-residue protein sequence, read N- to C-terminus: MAVGKNKRLSKGKKGLKKRTVDPFSRKDEYSVKAPSTFQIRDVGKTLVNRTTGLKNANDSLKGRIFEVSLADLQNDEDHAFRKVKLRVDEVQGKNCLTNFHGLDFTSDKLRSLVRKWQSLIEANVTVKTTDDYLLRLFAIAFTKRRPNQIKKTTYAGSSQIRAIRKKMTEIIQREAASCTLSQLTTKLIPEVIGREIEKSTQGIYPLQNVHIRKVKLLKSPKFDLGALLNLHGESTTDDQGHKVEREFKETVLESV.

A compositionally biased stretch (basic residues) spans 1–18 (MAVGKNKRLSKGKKGLKK). The segment at 1-20 (MAVGKNKRLSKGKKGLKKRT) is disordered. Position 2 is an N-acetylalanine; partial (alanine 2).

Belongs to the eukaryotic ribosomal protein eS1 family. Component of the small ribosomal subunit. Mature ribosomes consist of a small (40S) and a large (60S) subunit. The 40S subunit contains about 33 different proteins and 1 molecule of RNA (18S). The 60S subunit contains about 49 different proteins and 3 molecules of RNA (25S, 5.8S and 5S).

The protein resides in the cytoplasm. This is Small ribosomal subunit protein eS1 (rps1) from Talaromyces marneffei (strain ATCC 18224 / CBS 334.59 / QM 7333) (Penicillium marneffei).